A 361-amino-acid polypeptide reads, in one-letter code: Peptide chain release factor 1 (361 aa).

At glutamine 235 the chain carries N5-methylglutamine.

The protein belongs to the prokaryotic/mitochondrial release factor family. In terms of processing, methylated by PrmC. Methylation increases the termination efficiency of RF1.

It localises to the cytoplasm. Peptide chain release factor 1 directs the termination of translation in response to the peptide chain termination codons UAG and UAA. In Rhodopseudomonas palustris (strain BisB18), this protein is Peptide chain release factor 1.